A 401-amino-acid chain; its full sequence is Imidazolonepropionase (401 aa).

Residues histidine 70 and histidine 72 each contribute to the Fe(3+) site. Zn(2+) contacts are provided by histidine 70 and histidine 72. 4-imidazolone-5-propanoate contacts are provided by arginine 79, tyrosine 142, and histidine 175. Position 142 (tyrosine 142) interacts with N-formimidoyl-L-glutamate. Fe(3+) is bound at residue histidine 238. Residue histidine 238 coordinates Zn(2+). Glutamine 241 serves as a coordination point for 4-imidazolone-5-propanoate. Aspartate 313 lines the Fe(3+) pocket. Aspartate 313 provides a ligand contact to Zn(2+). Residues asparagine 315 and glycine 317 each contribute to the N-formimidoyl-L-glutamate site. Threonine 318 serves as a coordination point for 4-imidazolone-5-propanoate.

The protein belongs to the metallo-dependent hydrolases superfamily. HutI family. Requires Zn(2+) as cofactor. Fe(3+) is required as a cofactor.

It is found in the cytoplasm. The catalysed reaction is 4-imidazolone-5-propanoate + H2O = N-formimidoyl-L-glutamate. Its pathway is amino-acid degradation; L-histidine degradation into L-glutamate; N-formimidoyl-L-glutamate from L-histidine: step 3/3. Its function is as follows. Catalyzes the hydrolytic cleavage of the carbon-nitrogen bond in imidazolone-5-propanoate to yield N-formimidoyl-L-glutamate. It is the third step in the universal histidine degradation pathway. The chain is Imidazolonepropionase from Acidiphilium cryptum (strain JF-5).